Reading from the N-terminus, the 166-residue chain is MMSSMALSSTSLCSSFISQHPKLSITASPPLFHTQTTKPISVKRKIITLAAPETLTAETVTGIDTSDNTPQQTIKVVKPDEKSRVVLKFVWMEKNIGLGLDQHVPGHGTIPLSPYFFWPRKDAWEELKSTLEAKPWISQKKMIILLNQATDIINLWQQSGGNLTSQ.

Belongs to the chloroplast-specific ribosomal protein cS23 family. As to quaternary structure, part of the 30S ribosomal subunit.

It is found in the plastid. The protein resides in the chloroplast. In terms of biological role, component of the chloroplast ribosome (chloro-ribosome), a dedicated translation machinery responsible for the synthesis of chloroplast genome-encoded proteins, including proteins of the transcription and translation machinery and components of the photosynthetic apparatus. The polypeptide is Small ribosomal subunit protein cS23z (Arabidopsis thaliana (Mouse-ear cress)).